The sequence spans 375 residues: Queuine tRNA-ribosyltransferase (375 aa).

Residue Asp89 is the Proton acceptor of the active site. Substrate contacts are provided by residues 89–93 (DSGGF), Asp143, Gln187, and Gly214. Residues 245–251 (GVGKPED) form an RNA binding region. Catalysis depends on Asp264, which acts as the Nucleophile. The RNA binding; important for wobble base 34 recognition stretch occupies residues 269 to 273 (TRNAR). Positions 302, 304, 307, and 333 each coordinate Zn(2+).

Belongs to the queuine tRNA-ribosyltransferase family. In terms of assembly, homodimer. Within each dimer, one monomer is responsible for RNA recognition and catalysis, while the other monomer binds to the replacement base PreQ1. Zn(2+) serves as cofactor.

The catalysed reaction is 7-aminomethyl-7-carbaguanine + guanosine(34) in tRNA = 7-aminomethyl-7-carbaguanosine(34) in tRNA + guanine. It participates in tRNA modification; tRNA-queuosine biosynthesis. In terms of biological role, catalyzes the base-exchange of a guanine (G) residue with the queuine precursor 7-aminomethyl-7-deazaguanine (PreQ1) at position 34 (anticodon wobble position) in tRNAs with GU(N) anticodons (tRNA-Asp, -Asn, -His and -Tyr). Catalysis occurs through a double-displacement mechanism. The nucleophile active site attacks the C1' of nucleotide 34 to detach the guanine base from the RNA, forming a covalent enzyme-RNA intermediate. The proton acceptor active site deprotonates the incoming PreQ1, allowing a nucleophilic attack on the C1' of the ribose to form the product. After dissociation, two additional enzymatic reactions on the tRNA convert PreQ1 to queuine (Q), resulting in the hypermodified nucleoside queuosine (7-(((4,5-cis-dihydroxy-2-cyclopenten-1-yl)amino)methyl)-7-deazaguanosine). This Shigella flexneri serotype 5b (strain 8401) protein is Queuine tRNA-ribosyltransferase.